An 81-amino-acid chain; its full sequence is Cytotoxin 5 (81 aa).

A signal peptide spans 1 to 21; it reads MKTLLLTLVVVTIVCLDLGYT. Disulfide bonds link C24–C42, C35–C59, C63–C74, and C75–C80.

Belongs to the three-finger toxin family. Short-chain subfamily. Type IA cytotoxin sub-subfamily. As to quaternary structure, monomer in solution; Homodimer and oligomer in the presence of negatively charged lipids forming a pore with a size ranging between 20 and 30 Angstroms. In terms of tissue distribution, expressed by the venom gland.

It is found in the secreted. Its subcellular location is the target cell membrane. In terms of biological role, shows cytolytic activity on many different cells by forming pore in lipid membranes. In vivo, increases heart rate or kills the animal by cardiac arrest. In addition, it binds to heparin with high affinity, interacts with Kv channel-interacting protein 1 (KCNIP1) in a calcium-independent manner, and binds to integrin alpha-V/beta-3 (ITGAV/ITGB3) with moderate affinity. The protein is Cytotoxin 5 of Naja atra (Chinese cobra).